Here is a 540-residue protein sequence, read N- to C-terminus: Chaperonin GroEL (540 aa).

Residues 29–32, 86–90, Gly413, and Asp493 each bind ATP; these read TLGP and DGTTT. Residues 520–540 form a disordered region; sequence AEKPEPKPAPGPADPGAGMDF.

The protein belongs to the chaperonin (HSP60) family. Forms a cylinder of 14 subunits composed of two heptameric rings stacked back-to-back. Interacts with the co-chaperonin GroES.

The protein localises to the cytoplasm. It carries out the reaction ATP + H2O + a folded polypeptide = ADP + phosphate + an unfolded polypeptide.. Its function is as follows. Together with its co-chaperonin GroES, plays an essential role in assisting protein folding. The GroEL-GroES system forms a nano-cage that allows encapsulation of the non-native substrate proteins and provides a physical environment optimized to promote and accelerate protein folding. The protein is Chaperonin GroEL of Tropheryma whipplei (Whipple's bacillus).